The chain runs to 96 residues: UPF0184 protein CG14818 (96 aa).

Disordered regions lie at residues 1-28 (MSPK…LQEM) and 70-96 (IAEE…AAPK). A compositionally biased stretch (polar residues) spans 8-21 (DPSSSGDSGNTNVQ). A coiled-coil region spans residues 21–77 (QEADLQEMEDVNNSLDALSCALDAVEQRTDDIMSQLRELLNSNREIRRLIAEENDNA). Residues 72 to 85 (EENDNAPESGDDNM) are compositionally biased toward acidic residues.

It belongs to the UPF0184 (EST00098) family.

This is UPF0184 protein CG14818 from Drosophila melanogaster (Fruit fly).